A 428-amino-acid polypeptide reads, in one-letter code: MKNWKTLLLGIAMIANTSFAAPQVVDKVAAVVNNGVVLESDVDGLMQSVKLNAGQAGQQLPDDATLRHQILERLIMDQIILQMGQKMGVKITDEQLDQAIANIAKQNNMTMDQMRSRLAYDGLNYSTYRNQIRKEMIISEVRNNEVRRRITVLPQEVDALAKQIGTQNDASTELNLSHILIALPENPTSEQVNDAQRQAESIVEEARNGADFGKLAITYSADQQALKGGQMGWGRIQELPGIFAQALSTAKKGDIVGPIRSGVGFHILKVNDLRGQSQSISVTEVHARHILLKPSPIMNDQQARLKLEEIAADIKSGKTTFAAAAKEYSQDPGSANQGGDLGWATPDIFDPAFRDALTKLHKGQISAPVHSSFGWHLIELLDTRKVDKTDAAQKDRAYRMLMNRKFSEEAATWMQEQRASAYVKILSN.

Residues 1-20 (MKNWKTLLLGIAMIANTSFA) form the signal peptide. PpiC domains are found at residues 171 to 272 (STEL…KVND) and 282 to 382 (VTEV…ELLD).

It is found in the periplasm. It carries out the reaction [protein]-peptidylproline (omega=180) = [protein]-peptidylproline (omega=0). Chaperone involved in the correct folding and assembly of outer membrane proteins. Recognizes specific patterns of aromatic residues and the orientation of their side chains, which are found more frequently in integral outer membrane proteins. May act in both early periplasmic and late outer membrane-associated steps of protein maturation. The sequence is that of Chaperone SurA from Salmonella paratyphi A (strain ATCC 9150 / SARB42).